The following is a 168-amino-acid chain: Phosphopantetheine adenylyltransferase (168 aa).

S9 serves as a coordination point for substrate. Residues 9 to 10 and H17 each bind ATP; that span reads SF. Substrate is bound by residues K41, L73, and R87. Residues 88-90, E98, and 123-129 each bind ATP; these read GMR and WIYTSSS.

It belongs to the bacterial CoaD family. Homohexamer. Mg(2+) serves as cofactor.

The protein localises to the cytoplasm. It catalyses the reaction (R)-4'-phosphopantetheine + ATP + H(+) = 3'-dephospho-CoA + diphosphate. Its pathway is cofactor biosynthesis; coenzyme A biosynthesis; CoA from (R)-pantothenate: step 4/5. In terms of biological role, reversibly transfers an adenylyl group from ATP to 4'-phosphopantetheine, yielding dephospho-CoA (dPCoA) and pyrophosphate. This chain is Phosphopantetheine adenylyltransferase, found in Desulfosudis oleivorans (strain DSM 6200 / JCM 39069 / Hxd3) (Desulfococcus oleovorans).